Reading from the N-terminus, the 200-residue chain is Large ribosomal subunit protein uL4 (200 aa).

Residues 42–65 (TRAHKSRADVSGGGKKPFRQKGTG) are disordered.

This sequence belongs to the universal ribosomal protein uL4 family. Part of the 50S ribosomal subunit.

One of the primary rRNA binding proteins, this protein initially binds near the 5'-end of the 23S rRNA. It is important during the early stages of 50S assembly. It makes multiple contacts with different domains of the 23S rRNA in the assembled 50S subunit and ribosome. Its function is as follows. Forms part of the polypeptide exit tunnel. This Acinetobacter baumannii (strain AB307-0294) protein is Large ribosomal subunit protein uL4.